The sequence spans 344 residues: Ketol-acid reductoisomerase (NADP(+)) (344 aa).

Residues 1-181 (MATMYYEQNI…GAARGGLLET (181 aa)) enclose the KARI N-terminal Rossmann domain. NADP(+) contacts are provided by residues 25-28 (YGSQ), R48, S52, and 82-85 (DERQ). Residue H107 is part of the active site. G133 lines the NADP(+) pocket. The region spanning 182–327 (TFKEETETDL…AKLREMMPFI (146 aa)) is the KARI C-terminal knotted domain. D190, E194, E226, and E230 together coordinate Mg(2+). S251 serves as a coordination point for substrate.

The protein belongs to the ketol-acid reductoisomerase family. Requires Mg(2+) as cofactor.

It catalyses the reaction (2R)-2,3-dihydroxy-3-methylbutanoate + NADP(+) = (2S)-2-acetolactate + NADPH + H(+). The enzyme catalyses (2R,3R)-2,3-dihydroxy-3-methylpentanoate + NADP(+) = (S)-2-ethyl-2-hydroxy-3-oxobutanoate + NADPH + H(+). Its pathway is amino-acid biosynthesis; L-isoleucine biosynthesis; L-isoleucine from 2-oxobutanoate: step 2/4. It participates in amino-acid biosynthesis; L-valine biosynthesis; L-valine from pyruvate: step 2/4. Involved in the biosynthesis of branched-chain amino acids (BCAA). Catalyzes an alkyl-migration followed by a ketol-acid reduction of (S)-2-acetolactate (S2AL) to yield (R)-2,3-dihydroxy-isovalerate. In the isomerase reaction, S2AL is rearranged via a Mg-dependent methyl migration to produce 3-hydroxy-3-methyl-2-ketobutyrate (HMKB). In the reductase reaction, this 2-ketoacid undergoes a metal-dependent reduction by NADPH to yield (R)-2,3-dihydroxy-isovalerate. This chain is Ketol-acid reductoisomerase (NADP(+)), found in Lysinibacillus sphaericus (strain C3-41).